Reading from the N-terminus, the 222-residue chain is Chorionic somatomammotropin hormone-like 1 (222 aa).

The signal sequence occupies residues 1–26 (MAAGSRTSLLLAFALLCLPWLQEAGA). Positions 44 and 205 each coordinate Zn(2+). The cysteines at positions 213 and 220 are disulfide-linked.

This sequence belongs to the somatotropin/prolactin family.

It localises to the secreted. Its function is as follows. May be a novel gestational hormone required to compensate for absence of other members of the GH/CS cluster during gestation. This is Chorionic somatomammotropin hormone-like 1 (CSHL1) from Homo sapiens (Human).